The primary structure comprises 204 residues: Inner membrane protein BB_0250 (204 aa).

A run of 5 helical transmembrane segments spans residues 17–37 (IAYS…NVPI), 58–78 (ILIF…SFYI), 101–121 (YYYG…PFGV), 139–159 (FIVS…TLSF), and 172–192 (IKII…IIYV).

The protein belongs to the DedA family.

It is found in the cell inner membrane. In terms of biological role, required for proper cell division and envelope integrity. The chain is Inner membrane protein BB_0250 from Borreliella burgdorferi (strain ATCC 35210 / DSM 4680 / CIP 102532 / B31) (Borrelia burgdorferi).